Here is a 216-residue protein sequence, read N- to C-terminus: Probable succinyl-CoA:3-ketoacid coenzyme A transferase subunit B (216 aa).

E47 is an active-site residue.

It belongs to the 3-oxoacid CoA-transferase subunit B family. Heterodimer of a subunit A and a subunit B.

The catalysed reaction is a 3-oxo acid + succinyl-CoA = a 3-oxoacyl-CoA + succinate. In Bacillus subtilis (strain 168), this protein is Probable succinyl-CoA:3-ketoacid coenzyme A transferase subunit B (scoB).